We begin with the raw amino-acid sequence, 892 residues long: DNA ligase (892 aa).

The interval 1–23 (MTMTNRDDSEQLAWDFDAPESDG) is disordered. Residues 99 to 103 (DAAYD), 148 to 149 (SL), and E182 each bind NAD(+). Catalysis depends on K184, which acts as the N6-AMP-lysine intermediate. Residues R205, E244, K369, and K393 each contribute to the NAD(+) site. Zn(2+)-binding residues include C490, C493, C509, and C515. The region spanning 810–892 (GLPQTLAGKT…KQLLDTGTVE (83 aa)) is the BRCT domain.

This sequence belongs to the NAD-dependent DNA ligase family. LigA subfamily. Requires Mg(2+) as cofactor. The cofactor is Mn(2+).

The enzyme catalyses NAD(+) + (deoxyribonucleotide)n-3'-hydroxyl + 5'-phospho-(deoxyribonucleotide)m = (deoxyribonucleotide)n+m + AMP + beta-nicotinamide D-nucleotide.. DNA ligase that catalyzes the formation of phosphodiester linkages between 5'-phosphoryl and 3'-hydroxyl groups in double-stranded DNA using NAD as a coenzyme and as the energy source for the reaction. It is essential for DNA replication and repair of damaged DNA. This Bifidobacterium adolescentis (strain ATCC 15703 / DSM 20083 / NCTC 11814 / E194a) protein is DNA ligase.